Reading from the N-terminus, the 855-residue chain is MKTSSFESASSSGGSGGGGGGGGGEGSGSFNLRNLSKLILPPLGVPAGGHAQSGHAGPNDRRVISPLDSRYRCWDTFMVVLVAYSAWVYPFEVAFMNASPKGGLEVADIVVDLFFAVDIVLTFFVAYIDSRTQLLVRDRRRIATRYLSTFFIMDVASTIPFQGLAYIVTGEVRESPAFSLLGILRLWRLRKVKQFFTRLEKDIRFNYFWIRCARLIAVTLFLVHCAGCLYYLIADRYPHREKTWIGAVIPDFQEASLWIRYTSSVYWSITTMTTVGYGDMHAQNTVEMIFNIFYMLFNLGLTAYLIGNMTNLVVEGTRRTMEFRNSIRAASNFVGRNHLPPRLKQQILAYMCLKFRAESLNQQQLMDQLPKSICKGICEYLFLPVVKDVYLFKGVSREVLLLMVTKMKPEYIPPKEDVIVQNEAPDDVYIVVSGEVEVIYSDGEAEERVVATLGTRGVFGEVSALSDRPQSFTLRTRTLCQLLRLRQAALKEAMQSKPEDSVVIIKNFLKHQIEMHDMKVEDLLGEDAAGEYDHGNIPCNLLTVAATGNSSFLEDLLKVGMDPDVGDSKGRTALHIAASKGYEDCVLVLLKQACNVNIKDAQGNTALWNAIAARHHKIFNILYHFARVSSPHHAAGDLLCLAARRGDLDTLRELLKHGLAVDSEDRDGATALRVALAEGHADVARLLVLNGASVDRAASHNEQQAAAAVSVDELRELMKTRELAHPVTIVVDSPSPAAAAVIREVGSSGDSRNGRRQSARSDGAHWPRVSIYRGHPFVRNRSSEAGKLINLPGTMEEFRIIIEEKLKVDARKTLIMNDEGAEIDSIDVIRDNDKLFIVTEEHMTAVASMDSVSGS.

Low complexity predominate over residues 1–12 (MKTSSFESASSS). The tract at residues 1–24 (MKTSSFESASSSGGSGGGGGGGGG) is disordered. The Cytoplasmic segment spans residues 1-75 (MKTSSFESAS…PLDSRYRCWD (75 aa)). Over residues 13–24 (GGSGGGGGGGGG) the composition is skewed to gly residues. Residues 76-96 (TFMVVLVAYSAWVYPFEVAFM) traverse the membrane as a helical segment. Residues 97–105 (NASPKGGLE) lie on the Extracellular side of the membrane. Residues 106–126 (VADIVVDLFFAVDIVLTFFVA) traverse the membrane as a helical segment. The Cytoplasmic segment spans residues 127-149 (YIDSRTQLLVRDRRRIATRYLST). Residues 150–170 (FFIMDVASTIPFQGLAYIVTG) form a helical membrane-spanning segment. Residues 171–179 (EVRESPAFS) lie on the Extracellular side of the membrane. The chain crosses the membrane as a helical; Voltage-sensor span at residues 180–200 (LLGILRLWRLRKVKQFFTRLE). The Cytoplasmic segment spans residues 201–214 (KDIRFNYFWIRCAR). A helical transmembrane segment spans residues 215–235 (LIAVTLFLVHCAGCLYYLIAD). Topologically, residues 236-262 (RYPHREKTWIGAVIPDFQEASLWIRYT) are extracellular. Positions 263-282 (SSVYWSITTMTTVGYGDMHA) form an intramembrane region, pore-forming. Topologically, residues 283–285 (QNT) are extracellular. Residues 286-306 (VEMIFNIFYMLFNLGLTAYLI) traverse the membrane as a helical segment. The Cytoplasmic segment spans residues 307 to 855 (GNMTNLVVEG…VASMDSVSGS (549 aa)). 391–511 (LFKGVSREVL…VVIIKNFLKH (121 aa)) contacts a nucleoside 3',5'-cyclic phosphate. 5 ANK repeats span residues 536–565 (NIPC…DPDV), 569–598 (KGRT…NVNI), 602–631 (QGNT…VSSP), 634–663 (AAGD…AVDS), and 667–696 (DGAT…SVDR). The segment at 744–765 (EVGSSGDSRNGRRQSARSDGAH) is disordered. The region spanning 768 to 855 (RVSIYRGHPF…VASMDSVSGS (88 aa)) is the KHA domain.

The protein belongs to the potassium channel family. Plant (TC 1.A.1.4) subfamily. The potassium channel is probably a homo- or heterotetrameric complex of pore-forming subunits.

It localises to the membrane. Its function is as follows. Probable inward-rectifying potassium channel. Assuming opened or closed conformations in response to the voltage difference across the membrane, the channel is activated by hyperpolarization. This is Potassium channel AKT2 from Oryza sativa subsp. japonica (Rice).